Here is a 548-residue protein sequence, read N- to C-terminus: MKRPKLKKGSKRLSCHKRYKIQKKVREHNRKARKEAKKSGTRKQKKEISVPNNAPFKAEILQEAQRRRQQEEELKQNRKLERQKEVAKRRKLDEKKKKNSEKREKRDNKKNKGTKAAESAEVVSCRHVNKVLEQSDVVLEVLDARDPLGSRCAQAEEAVLKSPNKRLLLLLNKADLVPRDVLEKWLQVLTAELPTVPFRCLPQAPSKSPGKKHKVPNTADLCTENRCPGGQVLLRILHSLCPSQSDAIKVGVIGFANVGKSSVINSLKQSHVCNVGPTKGTTRVLQEVRLDPQIRMLDSPALVVSPQNAPLAVMLRSVSDCNVDVLAAVSAILKHCSKQELMLHYTLPDYRNSLECVTLLAQRRGLLKKGGVPDTEAAGRLLFNDWMGVRMKYYCQPPDSPGVQPHITKEVTAAMSSGICSEQLAQDNASTLKALKCPSPANLVVFTSVGPTGAIMDERQLVEPEPIEEELEANDGEEDVEEEHEGSEEEEDEEVEQEVVSAKEQEVVSAKEQEVVSAKEQDSKSAGPSVSFDQAQEDDAYDFNTDFV.

Residues 1–45 show a composition bias toward basic residues; the sequence is MKRPKLKKGSKRLSCHKRYKIQKKVREHNRKARKEAKKSGTRKQK. Residues 1–118 are disordered; it reads MKRPKLKKGS…KKNKGTKAAE (118 aa). A coiled-coil region spans residues 58–114; that stretch reads AEILQEAQRRRQQEEELKQNRKLERQKEVAKRRKLDEKKKKNSEKREKRDNKKNKGT. The span at 64–107 shows a compositional bias: basic and acidic residues; it reads AQRRRQQEEELKQNRKLERQKEVAKRRKLDEKKKKNSEKREKRD. Residues 125–305 enclose the CP-type G domain; it reads CRHVNKVLEQ…MLDSPALVVS (181 aa). GTP is bound by residues 172-175, 256-263, and 298-301; these read NKAD, ANVGKSSV, and DSPA. Residues 459 to 548 form a disordered region; the sequence is RQLVEPEPIE…DAYDFNTDFV (90 aa). The segment covering 465 to 497 has biased composition (acidic residues); sequence EPIEEELEANDGEEDVEEEHEGSEEEEDEEVEQ. Residues 501 to 523 show a composition bias toward basic and acidic residues; the sequence is SAKEQEVVSAKEQEVVSAKEQDS. Over residues 524–534 the composition is skewed to polar residues; the sequence is KSAGPSVSFDQ.

The protein belongs to the TRAFAC class YlqF/YawG GTPase family.

It localises to the nucleus. The protein localises to the nucleolus. Its function is as follows. May play a role in regulating cellular proliferation. The polypeptide is Guanine nucleotide-binding protein-like 3 (gnl3) (Xenopus tropicalis (Western clawed frog)).